The primary structure comprises 305 residues: Achromobactin-binding periplasmic protein (305 aa).

Positions 1–29 (MNEYLVSRRRLLRLSLSLLPLGLGRPALA) are cleaved as a signal peptide. The Fe/B12 periplasmic-binding domain occupies 37-302 (RVITLFQGAT…DIARVTGIAG (266 aa)).

The protein belongs to the bacterial solute-binding protein 8 family.

It is found in the periplasm. In terms of biological role, binds citrate- or chloride-dependent Fe(3+); part of the binding-protein-dependent transport system CbrABCD for uptake of the siderophore achromobactin. The protein is Achromobactin-binding periplasmic protein (cbrA) of Dickeya dadantii (strain 3937) (Erwinia chrysanthemi (strain 3937)).